Reading from the N-terminus, the 886-residue chain is Adhesion G protein-coupled receptor E1 (886 aa).

Residues 1–20 (MRGFNLLLFWGCCVMHSWEG) form the signal peptide. Topologically, residues 21 to 599 (HIRPTRKPNT…IMASGELTMD (579 aa)) are extracellular. Residues 31 to 79 (KGNNCRDSTLCPAYATCTNTVDSYYCACKQGFLSSNGQNHFKDPGVRCK) enclose the EGF-like 1 domain. 18 disulfide bridges follow: cysteine 35–cysteine 47, cysteine 41–cysteine 56, cysteine 58–cysteine 78, cysteine 84–cysteine 97, cysteine 91–cysteine 106, cysteine 108–cysteine 130, cysteine 136–cysteine 148, cysteine 142–cysteine 157, cysteine 159–cysteine 170, cysteine 176–cysteine 188, cysteine 182–cysteine 197, cysteine 199–cysteine 219, cysteine 225–cysteine 235, cysteine 229–cysteine 244, cysteine 246–cysteine 266, cysteine 272–cysteine 285, cysteine 279–cysteine 294, and cysteine 296–cysteine 315. Residues 80–131 (DIDECSQSPQPCGPNSSCKNLSGRYKCSCLDGFSSPTGNDWVPGKPGNFSCT) enclose the EGF-like 2; calcium-binding domain. N-linked (GlcNAc...) asparagine glycosylation is found at asparagine 94, asparagine 99, and asparagine 127. One can recognise an EGF-like 3; calcium-binding domain in the interval 132–171 (DINECLTSSVCPEHSDCVNSMGSYSCSCQVGFISRNSTCE). Residue asparagine 167 is glycosylated (N-linked (GlcNAc...) asparagine). In terms of domain architecture, EGF-like 4; calcium-binding spans 172 to 220 (DVDECADPRACPEHATCNNTVGNYSCFCNPGFESSSGHLSFQGLKASCE). Asparagine 189 and asparagine 194 each carry an N-linked (GlcNAc...) asparagine glycan. An EGF-like 5; calcium-binding domain is found at 221–267 (DIDECTEMCPINSTCTNTPGSYFCTCHPGFAPSNGQLNFTDQGVECR). N-linked (GlcNAc...) asparagine glycans are attached at residues asparagine 232 and asparagine 258. In terms of domain architecture, EGF-like 6; calcium-binding spans 268-316 (DIDECRQDPSTCGPNSICTNALGSYSCGCIAGFHPNPEGSQKDGNFSCQ). 4 N-linked (GlcNAc...) asparagine glycosylation sites follow: asparagine 312, asparagine 366, asparagine 375, and asparagine 448. The region spanning 431–597 (EYLDIESKVI…AVIMASGELT (167 aa)) is the GAIN-B domain. Cystine bridges form between cysteine 550–cysteine 579 and cysteine 567–cysteine 581. A GPS region spans residues 550 to 597 (CVSWSTDVKGGRWTSFGCVILEASETYTICSCNQMANLAVIMASGELT). The chain crosses the membrane as a helical span at residues 600–627 (FSLYIISHVGIIISLVCLVLAIATFLLC). Topologically, residues 628–634 (RSIRNHN) are cytoplasmic. The chain crosses the membrane as a helical span at residues 635–656 (TYLHLHLCVCLLLAKTLFLAGI). Over 657-666 (HKTDNKMGCA) the chain is Extracellular. The chain crosses the membrane as a helical span at residues 667-690 (IIAGFLHYLFLACFFWMLVEAVIL). At 691–709 (FLMVRNLKVVNYFSSRNIK) the chain is on the cytoplasmic side. The chain crosses the membrane as a helical span at residues 710–731 (MLHICAFGYGLPMLVVVISASV). The Extracellular segment spans residues 732–747 (QPQGYGMHNRCWLNTE). Residues 748 to 776 (TGFIWSFLGPVCTVIVINSLLLTWTLWIL) traverse the membrane as a helical segment. Residues 777–794 (RQRLSSVNAEVSTLKDTR) are Cytoplasmic-facing. The helical transmembrane segment at 795-814 (LLTFKAFAQLFILGCSWVLG) threads the bilayer. Topologically, residues 815–829 (IFQIGPVAGVMAYLF) are extracellular. The helical transmembrane segment at 830–852 (TIINSLQGAFIFLIHCLLNGQVR) threads the bilayer. Residues 853–886 (EEYKRWITGKTKPSSQSQTSRILLSSMPSASKTG) lie on the Cytoplasmic side of the membrane. A disordered region spans residues 862-886 (KTKPSSQSQTSRILLSSMPSASKTG). Residues 863 to 886 (TKPSSQSQTSRILLSSMPSASKTG) are compositionally biased toward polar residues.

This sequence belongs to the G-protein coupled receptor 2 family. Adhesion G-protein coupled receptor (ADGR) subfamily. Expression is restricted to eosinophils.

It is found in the cell membrane. Functionally, orphan receptor involved in cell adhesion and probably in cell-cell interactions specifically involving cells of the immune system. May play a role in regulatory T-cells (Treg) development. The chain is Adhesion G protein-coupled receptor E1 from Homo sapiens (Human).